The sequence spans 237 residues: Orotidine 5'-phosphate decarboxylase (237 aa).

Substrate contacts are provided by residues aspartate 11, lysine 34, 61–70 (DLKLHDIPNT), threonine 124, arginine 186, glutamine 195, glycine 215, and arginine 216. Catalysis depends on lysine 63, which acts as the Proton donor.

Belongs to the OMP decarboxylase family. Type 1 subfamily. In terms of assembly, homodimer.

The enzyme catalyses orotidine 5'-phosphate + H(+) = UMP + CO2. The protein operates within pyrimidine metabolism; UMP biosynthesis via de novo pathway; UMP from orotate: step 2/2. In terms of biological role, catalyzes the decarboxylation of orotidine 5'-monophosphate (OMP) to uridine 5'-monophosphate (UMP). This chain is Orotidine 5'-phosphate decarboxylase, found in Lactococcus lactis subsp. cremoris (strain MG1363).